A 152-amino-acid chain; its full sequence is Transcriptional regulator MraZ (152 aa).

2 consecutive SpoVT-AbrB domains span residues 5–52 and 81–124; these read HSNR…PMPE and ATEV…DQGR.

This sequence belongs to the MraZ family. As to quaternary structure, forms oligomers.

Its subcellular location is the cytoplasm. The protein resides in the nucleoid. The chain is Transcriptional regulator MraZ from Solidesulfovibrio magneticus (strain ATCC 700980 / DSM 13731 / RS-1) (Desulfovibrio magneticus).